Here is a 452-residue protein sequence, read N- to C-terminus: Mitochondrial distribution and morphology protein 34 (452 aa).

Positions 1–196 (MSFRVKGWSD…LPSIIYKMSR (196 aa)) constitute an SMP-LTD domain.

This sequence belongs to the MDM34 family. Component of the ER-mitochondria encounter structure (ERMES) or MDM complex, composed of mmm1, mdm10, mdm12 and mdm34.

Its subcellular location is the mitochondrion outer membrane. In terms of biological role, component of the ERMES/MDM complex, which serves as a molecular tether to connect the endoplasmic reticulum (ER) and mitochondria. Components of this complex are involved in the control of mitochondrial shape and protein biogenesis, and function in nonvesicular lipid trafficking between the ER and mitochondria. Mdm34 is required for the interaction of the ER-resident membrane protein mmm1 and the outer mitochondrial membrane-resident beta-barrel protein mdm10. This is Mitochondrial distribution and morphology protein 34 from Schizosaccharomyces pombe (strain 972 / ATCC 24843) (Fission yeast).